The primary structure comprises 69 residues: Large ribosomal subunit protein bL32c (69 aa).

The protein belongs to the bacterial ribosomal protein bL32 family.

It localises to the plastid. The protein localises to the chloroplast. The chain is Large ribosomal subunit protein bL32c (rpl32) from Marchantia polymorpha (Common liverwort).